Here is a 348-residue protein sequence, read N- to C-terminus: MAEKVLVTGGAGYIGSHTVLELLEAGYSPMVIDNFHNAIRGGGSMPESLRRVQDLTGRSVEFEEMDILDQAALQRLFKKHSFMAVIHFAGLKAVGESVQKPLDYYRVNLTGTIQLLEIMRAHGVKNLVFSSSATVYGNPQYLPLDEAHPTGGCTNPYGKSKFFIEEMIRDLCQADKAWNAVLLRYFNPIGAHASGCIGEDPQGIPNNLMPYVSQVAIGRREVLNVFGNDYDTEDGTGVRDYIHVVDLAKGHIAALRKLKEQCGCRIYNLGTGTGYSVLQMVQAMEKASGKKIPYKVVARREGDVAACYANPSLALKELGWSAALGLDRMCEDLWRWQKQNPSGFGTQA.

NAD(+)-binding positions include 12-14, 33-37, 66-67, Phe-88, and Lys-92; these read GYI, DNFHN, and DI. 132 to 134 is a binding site for substrate; sequence SAT. Catalysis depends on Tyr-157, which acts as the Proton acceptor. NAD(+) contacts are provided by Lys-161 and Tyr-185. Substrate is bound by residues 185 to 187, 206 to 208, 224 to 226, Arg-239, and 300 to 303; these read YFN, NNL, NVF, and REGD.

Belongs to the NAD(P)-dependent epimerase/dehydratase family. As to quaternary structure, homodimer. NAD(+) is required as a cofactor.

It catalyses the reaction UDP-alpha-D-glucose = UDP-alpha-D-galactose. The enzyme catalyses UDP-N-acetyl-alpha-D-glucosamine = UDP-N-acetyl-alpha-D-galactosamine. Its pathway is carbohydrate metabolism; galactose metabolism. In terms of biological role, catalyzes two distinct but analogous reactions: the reversible epimerization of UDP-glucose to UDP-galactose and the reversible epimerization of UDP-N-acetylglucosamine to UDP-N-acetylgalactosamine. The reaction with UDP-Gal plays a critical role in the Leloir pathway of galactose catabolism in which galactose is converted to the glycolytic intermediate glucose 6-phosphate. It contributes to the catabolism of dietary galactose and enables the endogenous biosynthesis of both UDP-Gal and UDP-GalNAc when exogenous sources are limited. Both UDP-sugar interconversions are important in the synthesis of glycoproteins and glycolipids. In Bos taurus (Bovine), this protein is UDP-glucose 4-epimerase.